The following is an 87-amino-acid chain: Large ribosomal subunit protein bL31B (87 aa).

This sequence belongs to the bacterial ribosomal protein bL31 family. Type B subfamily. As to quaternary structure, part of the 50S ribosomal subunit.

The chain is Large ribosomal subunit protein bL31B from Burkholderia multivorans (strain ATCC 17616 / 249).